Here is a 313-residue protein sequence, read N- to C-terminus: Proline iminopeptidase (313 aa).

In terms of domain architecture, AB hydrolase-1 spans 35–298 (KPVVILHGGP…TPGAGHSAFE (264 aa)). Ser110 functions as the Nucleophile in the catalytic mechanism. Asp266 is a catalytic residue. The active-site Proton donor is His294.

It belongs to the peptidase S33 family.

The protein resides in the cytoplasm. It catalyses the reaction Release of N-terminal proline from a peptide.. Specifically catalyzes the removal of N-terminal proline residues from peptides. The polypeptide is Proline iminopeptidase (pip) (Xylella fastidiosa (strain 9a5c)).